Reading from the N-terminus, the 372-residue chain is Heat-inducible transcription repressor HrcA (372 aa).

The interval 300 to 334 (YGRSGAAGEPAGNDPVGEPETESETESQTNDTEPI) is disordered.

This sequence belongs to the HrcA family.

Functionally, negative regulator of class I heat shock genes (grpE-dnaK-dnaJ and groELS operons). Prevents heat-shock induction of these operons. In Bifidobacterium longum (strain NCC 2705), this protein is Heat-inducible transcription repressor HrcA.